We begin with the raw amino-acid sequence, 399 residues long: Protein IQ-DOMAIN 25 (399 aa).

A Nuclear localization signal motif is present at residues 1–8 (MRKNLTKL). Calmodulin-binding stretches follow at residues 81-91 (KERRTHAIAVA) and 99-110 (DAAVAAAKAAAA). 2 IQ domains span residues 130–158 (EHRAAMQIQCAFRGYLARKALRALRGVVK) and 159–181 (IQALVRGFLVRNQAAATLRSMEA). 3 disordered regions span residues 198 to 219 (NGNAAPARKSTERFSGSLENRN), 262 to 302 (SPLS…SPAR), and 346 to 377 (LRSHSAPRQRPESNASAGGWRRSIGGGGVRMQ). Residues 285 to 294 (KFPTAQSTPR) show a composition bias toward polar residues.

This sequence belongs to the IQD family. Binds to multiple calmodulin (CaM) in the presence of Ca(2+) and CaM-like proteins.

It localises to the nucleus. It is found in the cell membrane. In terms of biological role, may be involved in cooperative interactions with calmodulins or calmodulin-like proteins. Recruits calmodulin proteins to microtubules, thus being a potential scaffold in cellular signaling and trafficking. May associate with nucleic acids and regulate gene expression at the transcriptional or post-transcriptional level. The protein is Protein IQ-DOMAIN 25 of Arabidopsis thaliana (Mouse-ear cress).